The chain runs to 188 residues: dCTP deaminase (188 aa).

DCTP is bound at residue 109–114 (KSTYAR). The Proton donor/acceptor role is filled by Glu-135. Residues Gln-154, Tyr-168, and Gln-178 each coordinate dCTP.

This sequence belongs to the dCTP deaminase family. In terms of assembly, homotrimer.

It carries out the reaction dCTP + H2O + H(+) = dUTP + NH4(+). It functions in the pathway pyrimidine metabolism; dUMP biosynthesis; dUMP from dCTP (dUTP route): step 1/2. Its function is as follows. Catalyzes the deamination of dCTP to dUTP. The polypeptide is dCTP deaminase (Helicobacter hepaticus (strain ATCC 51449 / 3B1)).